Reading from the N-terminus, the 350-residue chain is 3-isopropylmalate dehydrogenase (350 aa).

76 to 87 serves as a coordination point for NAD(+); the sequence is GPKWDNAPKRPE. Positions 94, 104, 132, and 217 each coordinate substrate. Residues Asp-217, Asp-241, and Asp-245 each contribute to the Mg(2+) site. Residue 275 to 287 coordinates NAD(+); that stretch reads GSAPDIANQNIAN.

This sequence belongs to the isocitrate and isopropylmalate dehydrogenases family. LeuB type 1 subfamily. Homodimer. The cofactor is Mg(2+). It depends on Mn(2+) as a cofactor.

The protein resides in the cytoplasm. The catalysed reaction is (2R,3S)-3-isopropylmalate + NAD(+) = 4-methyl-2-oxopentanoate + CO2 + NADH. It participates in amino-acid biosynthesis; L-leucine biosynthesis; L-leucine from 3-methyl-2-oxobutanoate: step 3/4. Catalyzes the oxidation of 3-carboxy-2-hydroxy-4-methylpentanoate (3-isopropylmalate) to 3-carboxy-4-methyl-2-oxopentanoate. The product decarboxylates to 4-methyl-2 oxopentanoate. The polypeptide is 3-isopropylmalate dehydrogenase (Listeria innocua serovar 6a (strain ATCC BAA-680 / CLIP 11262)).